We begin with the raw amino-acid sequence, 246 residues long: Acetoacetyl-CoA reductase (246 aa).

NADP(+) is bound by residues glycine 13–isoleucine 15, glycine 35, arginine 40, glycine 60–valine 62, and asparagine 88–threonine 92. Residues aspartate 94 and glutamine 147–glutamine 150 contribute to the substrate site. Tyrosine 153 serves as the catalytic Proton acceptor. Proline 183–isoleucine 186 is an NADP(+) binding site. Substrate-binding positions include glycine 184–tyrosine 185 and arginine 195.

It belongs to the short-chain dehydrogenases/reductases (SDR) family. Homotetramer.

Its subcellular location is the cytoplasm. It catalyses the reaction a (3R)-3-hydroxyacyl-CoA + NADP(+) = a 3-oxoacyl-CoA + NADPH + H(+). The enzyme catalyses (3R)-3-hydroxybutanoyl-CoA + NADP(+) = acetoacetyl-CoA + NADPH + H(+). It functions in the pathway biopolymer metabolism; poly-(R)-3-hydroxybutanoate biosynthesis. Catalyzes the chiral reduction of acetoacetyl-CoA to (R)-3-hydroxybutyryl-CoA. Is involved in the biosynthesis of polyhydroxybutyrate (PHB), which is accumulated as an intracellular energy reserve material when cells grow under conditions of nutrient limitation. The sequence is that of Acetoacetyl-CoA reductase from Cupriavidus necator (strain ATCC 17699 / DSM 428 / KCTC 22496 / NCIMB 10442 / H16 / Stanier 337) (Ralstonia eutropha).